A 64-amino-acid chain; its full sequence is Large ribosomal subunit protein bL35 (64 aa).

Positions 19-44 (TGKLKASRPGRRHKLTGKTPKRKRQL) are disordered. Residues 23–44 (KASRPGRRHKLTGKTPKRKRQL) are compositionally biased toward basic residues.

The protein belongs to the bacterial ribosomal protein bL35 family.

The protein is Large ribosomal subunit protein bL35 of Protochlamydia amoebophila (strain UWE25).